Consider the following 152-residue polypeptide: uncharacterized protein (152 aa).

The chain crosses the membrane as a helical span at residues 7-27 (TLSVIVFLISLIIIFGIYFSS).

It localises to the membrane. This is an uncharacterized protein from Methanocaldococcus jannaschii (strain ATCC 43067 / DSM 2661 / JAL-1 / JCM 10045 / NBRC 100440) (Methanococcus jannaschii).